The following is a 209-amino-acid chain: Small ribosomal subunit protein uS4 (209 aa).

Zn(2+) is bound by residues cysteine 9, cysteine 12, cysteine 26, and cysteine 31. Residues 9–31 (CKLCRREGMKLYLKGERCYTDKC) form a C4-type zinc finger. Residues 98-161 (ARLDNVVYRM…RDLEVIKKAI (64 aa)) enclose the S4 RNA-binding domain.

This sequence belongs to the universal ribosomal protein uS4 family. Part of the 30S ribosomal subunit. Contacts protein S5. The interaction surface between S4 and S5 is involved in control of translational fidelity. The cofactor is Zn(2+).

One of the primary rRNA binding proteins, it binds directly to 16S rRNA where it nucleates assembly of the body of the 30S subunit. Functionally, with S5 and S12 plays an important role in translational accuracy. The chain is Small ribosomal subunit protein uS4 (rpsD) from Thermotoga maritima (strain ATCC 43589 / DSM 3109 / JCM 10099 / NBRC 100826 / MSB8).